Here is a 220-residue protein sequence, read N- to C-terminus: Uracil-DNA glycosylase (220 aa).

The active-site Proton acceptor is the D65.

The protein belongs to the uracil-DNA glycosylase (UDG) superfamily. UNG family.

It localises to the cytoplasm. The enzyme catalyses Hydrolyzes single-stranded DNA or mismatched double-stranded DNA and polynucleotides, releasing free uracil.. Its function is as follows. Excises uracil residues from the DNA which can arise as a result of misincorporation of dUMP residues by DNA polymerase or due to deamination of cytosine. The chain is Uracil-DNA glycosylase from Amoebophilus asiaticus (strain 5a2).